Here is a 424-residue protein sequence, read N- to C-terminus: Gamma-glutamyl phosphate reductase (424 aa).

The tract at residues 1–27 (MSVEAQSRSGAVDTQEPADLREQVHSA) is disordered.

It belongs to the gamma-glutamyl phosphate reductase family.

It is found in the cytoplasm. The enzyme catalyses L-glutamate 5-semialdehyde + phosphate + NADP(+) = L-glutamyl 5-phosphate + NADPH + H(+). The protein operates within amino-acid biosynthesis; L-proline biosynthesis; L-glutamate 5-semialdehyde from L-glutamate: step 2/2. Catalyzes the NADPH-dependent reduction of L-glutamate 5-phosphate into L-glutamate 5-semialdehyde and phosphate. The product spontaneously undergoes cyclization to form 1-pyrroline-5-carboxylate. The polypeptide is Gamma-glutamyl phosphate reductase (Mycolicibacterium smegmatis (strain ATCC 700084 / mc(2)155) (Mycobacterium smegmatis)).